The chain runs to 303 residues: Coenzyme PQQ synthesis protein B (303 aa).

It belongs to the PqqB family.

It participates in cofactor biosynthesis; pyrroloquinoline quinone biosynthesis. Its function is as follows. May be involved in the transport of PQQ or its precursor to the periplasm. In Pseudomonas putida (strain ATCC 47054 / DSM 6125 / CFBP 8728 / NCIMB 11950 / KT2440), this protein is Coenzyme PQQ synthesis protein B.